A 1551-amino-acid chain; its full sequence is Serine/threonine-protein kinase MRCK gamma (1551 aa).

The Protein kinase domain occupies 71 to 337 (FEILKVIGRG…LDDFRKHPFF (267 aa)). Residues 77-85 (IGRGAFGEV) and Lys-100 contribute to the ATP site. The active-site Proton acceptor is the Asp-195. 2 positions are modified to phosphoserine; by autocatalysis: Ser-216 and Ser-228. Position 234 is a phosphothreonine; by autocatalysis (Thr-234). Residues 338–408 (EGVDWERLAT…TSGSPFDVQS (71 aa)) form the AGC-kinase C-terminal domain. 2 coiled-coil regions span residues 442–675 (QPQE…TESN) and 729–801 (KARR…QARG). Residues 578–605 (QESSQAKTVHAAPETNGIGSPEGQSQEA) are disordered. The tract at residues 820-886 (TEKDSAKDPG…SHTLRPRSFP (67 aa)) is disordered. Over residues 839–849 (AEAELRPEGRR) the composition is skewed to basic and acidic residues. Residues 877–926 (SHTLRPRSFPSPTKCLRCTSLMLGLGRQGLGCDTCGYFCHSACASQAPPC) form a Phorbol-ester/DAG-type zinc finger. One can recognise a PH domain in the interval 946–1065 (GTAYEGFLSV…WLQVLGELQR (120 aa)). Positions 1091 to 1365 (LPHALCAAVI…RPLNPEGSLF (275 aa)) constitute a CNH domain. In terms of domain architecture, CRIB spans 1436–1449 (ISPPTNFNHLVHVG). The disordered stretch occupies residues 1441-1551 (NFNHLVHVGP…PPDPESESSP (111 aa)). Over residues 1455 to 1468 (PNTRDGTRAQEQKS) the composition is skewed to basic and acidic residues. The residue at position 1481 (Ser-1481) is a Phosphoserine. A compositionally biased stretch (polar residues) spans 1511 to 1527 (TSLSSESVSCPQGSLSP).

It belongs to the protein kinase superfamily. AGC Ser/Thr protein kinase family. DMPK subfamily. Homodimer and homotetramer via the coiled coil regions. Interacts tightly with GTP-bound but not GDP-bound CDC42. Mg(2+) serves as cofactor.

The protein resides in the cytoplasm. It catalyses the reaction L-seryl-[protein] + ATP = O-phospho-L-seryl-[protein] + ADP + H(+). The enzyme catalyses L-threonyl-[protein] + ATP = O-phospho-L-threonyl-[protein] + ADP + H(+). Its activity is regulated as follows. Maintained in an inactive, closed conformation by an interaction between the kinase domain and the negative autoregulatory C-terminal coiled-coil region. Agonist binding to the phorbol ester binding site disrupts this, releasing the kinase domain to allow N-terminus-mediated dimerization and kinase activation by transautophosphorylation. May act as a downstream effector of CDC42 in cytoskeletal reorganization. Contributes to the actomyosin contractility required for cell invasion, through the regulation of MYPT1 and thus MLC2 phosphorylation. In Mus musculus (Mouse), this protein is Serine/threonine-protein kinase MRCK gamma.